Reading from the N-terminus, the 329-residue chain is DNA-directed RNA polymerase subunit alpha (329 aa).

The segment at Met1–Arg235 is alpha N-terminal domain (alpha-NTD). The interval Phe249–Asp329 is alpha C-terminal domain (alpha-CTD).

The protein belongs to the RNA polymerase alpha chain family. As to quaternary structure, homodimer. The RNAP catalytic core consists of 2 alpha, 1 beta, 1 beta' and 1 omega subunit. When a sigma factor is associated with the core the holoenzyme is formed, which can initiate transcription.

It carries out the reaction RNA(n) + a ribonucleoside 5'-triphosphate = RNA(n+1) + diphosphate. DNA-dependent RNA polymerase catalyzes the transcription of DNA into RNA using the four ribonucleoside triphosphates as substrates. The protein is DNA-directed RNA polymerase subunit alpha of Pasteurella multocida (strain Pm70).